The primary structure comprises 383 residues: MERRARSSSRESRGRGGRTPHKENKRAKAERSGGGRGRQEAGPEPSGSGRAGTPGEPRAPAATVVDVDEVRGSGEEGTEVVALLESERPEEGTKSSGLGACEWLLVLISLLFIIMTFPFSIWFCVKVVQEYERVIIFRLGHLLPGRAKGPGLFFFLPCLDTYHKVDLRLQTLEIPFHEIVTKDMFIMEIDAICYYRMENASLLLSSLAHVSKAVQFLVQTTMKRLLAHRSLTEILLERKSIAQDAKVALDSVTCIWGIKVERIEIKDVRLPAGLQHSLAVEAEAQRQAKVRMIAAEAEKAASESLRMAAEILSGTPAAVQLRYLHTLQSLSTEKPSTVVLPLPFDLLNCLSSPSNRTQGSLPFPSPSKPVEPLNPKKKDSPML.

The segment covering 1–41 has biased composition (basic and acidic residues); it reads MERRARSSSRESRGRGGRTPHKENKRAKAERSGGGRGRQEA. The disordered stretch occupies residues 1-76; it reads MERRARSSSR…VDEVRGSGEE (76 aa). Over 1 to 102 the chain is Cytoplasmic; sequence MERRARSSSR…TKSSGLGACE (102 aa). Cys-101 carries S-palmitoyl cysteine lipidation. The stretch at 103 to 123 is an intramembrane region; the sequence is WLLVLISLLFIIMTFPFSIWF. At 124 to 383 the chain is on the cytoplasmic side; that stretch reads CVKVVQEYER…NPKKKDSPML (260 aa). N-linked (GlcNAc...) asparagine glycosylation is present at Gln-287. Residues 355–383 are disordered; that stretch reads NRTQGSLPFPSPSKPVEPLNPKKKDSPML. Residues 374–383 are compositionally biased toward basic and acidic residues; that stretch reads NPKKKDSPML.

The protein belongs to the band 7/mec-2 family. Interacts with nephrin/NPHS1 and KIRREL1. Interacts directly with CD2AP. Interacts with DDN. In terms of processing, glycosylated. Almost exclusively expressed in the podocytes of fetal and mature kidney glomeruli.

It is found in the cell membrane. Its subcellular location is the endoplasmic reticulum. Plays a role in the regulation of glomerular permeability, acting probably as a linker between the plasma membrane and the cytoskeleton. The protein is Podocin (NPHS2) of Homo sapiens (Human).